The following is a 577-amino-acid chain: Proline--tRNA ligase (577 aa).

The protein belongs to the class-II aminoacyl-tRNA synthetase family. ProS type 1 subfamily. In terms of assembly, homodimer.

Its subcellular location is the cytoplasm. It catalyses the reaction tRNA(Pro) + L-proline + ATP = L-prolyl-tRNA(Pro) + AMP + diphosphate. Catalyzes the attachment of proline to tRNA(Pro) in a two-step reaction: proline is first activated by ATP to form Pro-AMP and then transferred to the acceptor end of tRNA(Pro). As ProRS can inadvertently accommodate and process non-cognate amino acids such as alanine and cysteine, to avoid such errors it has two additional distinct editing activities against alanine. One activity is designated as 'pretransfer' editing and involves the tRNA(Pro)-independent hydrolysis of activated Ala-AMP. The other activity is designated 'posttransfer' editing and involves deacylation of mischarged Ala-tRNA(Pro). The misacylated Cys-tRNA(Pro) is not edited by ProRS. This is Proline--tRNA ligase from Herminiimonas arsenicoxydans.